Consider the following 313-residue polypeptide: Protein-glutamine deamidase Cif (313 aa).

Active-site residues include C128, H186, and Q205.

The protein belongs to the Cif family.

The protein resides in the secreted. It is found in the host nucleus. It catalyses the reaction L-glutaminyl-[protein] + H2O = L-glutamyl-[protein] + NH4(+). Protein-glutamine deamidase effector that inhibits the host cell cycle and other key cellular processes such as the actin network and programmed-cell death. Acts by mediating the side chain deamidation of 'Gln-40' of host NEDD8, converting it to glutamate, thereby abolishing the activity of cullin-RING-based E3 ubiquitin-protein ligase complexes (CRL complexes). Inactivation of CRL complexes prevents ubiquitination and subsequent degradation of the cyclin-dependent kinase inhibitors CDKN1A/p21 and CDKN1B/p27, leading to G1 and G2 cell cycle arrests in host cells. Deamidation of 'Gln-40' of host NEDD8 also triggers macrophage-specific programmed cell death. Also able to catalyze deamidation of 'Gln-40' of host ubiquitin in vitro; however, NEDD8 constitutes the preferred substrate in vivo. The polypeptide is Protein-glutamine deamidase Cif (Photorhabdus laumondii subsp. laumondii (strain DSM 15139 / CIP 105565 / TT01) (Photorhabdus luminescens subsp. laumondii)).